Reading from the N-terminus, the 124-residue chain is Putative iron-sulfur cluster insertion protein ErpA (124 aa).

Iron-sulfur cluster is bound by residues Cys52, Cys116, and Cys118.

The protein belongs to the HesB/IscA family. In terms of assembly, homodimer. The cofactor is iron-sulfur cluster.

In terms of biological role, required for insertion of 4Fe-4S clusters. The sequence is that of Putative iron-sulfur cluster insertion protein ErpA from Ralstonia nicotianae (strain ATCC BAA-1114 / GMI1000) (Ralstonia solanacearum).